A 664-amino-acid chain; its full sequence is Exoribonuclease 2 (664 aa).

In terms of domain architecture, RNB spans 193-521 (RIDMTHIPFV…INHRMLKALI (329 aa)). In terms of domain architecture, S1 motif spans 568–650 (QTLFTGEIFD…ENRSLVAKPT (83 aa)).

Belongs to the RNR ribonuclease family. RNase II subfamily.

It localises to the cytoplasm. The enzyme catalyses Exonucleolytic cleavage in the 3'- to 5'-direction to yield nucleoside 5'-phosphates.. In terms of biological role, involved in mRNA degradation. Hydrolyzes single-stranded polyribonucleotides processively in the 3' to 5' direction. This chain is Exoribonuclease 2, found in Vibrio vulnificus (strain YJ016).